The primary structure comprises 297 residues: Putative S-adenosyl-L-methionine-dependent methyltransferase Mmcs_1044 (297 aa).

Residues Asp124 and 153 to 154 (DL) contribute to the S-adenosyl-L-methionine site.

It belongs to the UPF0677 family.

In terms of biological role, exhibits S-adenosyl-L-methionine-dependent methyltransferase activity. The polypeptide is Putative S-adenosyl-L-methionine-dependent methyltransferase Mmcs_1044 (Mycobacterium sp. (strain MCS)).